The sequence spans 160 residues: SsrA-binding protein (160 aa).

This sequence belongs to the SmpB family.

The protein localises to the cytoplasm. Functionally, required for rescue of stalled ribosomes mediated by trans-translation. Binds to transfer-messenger RNA (tmRNA), required for stable association of tmRNA with ribosomes. tmRNA and SmpB together mimic tRNA shape, replacing the anticodon stem-loop with SmpB. tmRNA is encoded by the ssrA gene; the 2 termini fold to resemble tRNA(Ala) and it encodes a 'tag peptide', a short internal open reading frame. During trans-translation Ala-aminoacylated tmRNA acts like a tRNA, entering the A-site of stalled ribosomes, displacing the stalled mRNA. The ribosome then switches to translate the ORF on the tmRNA; the nascent peptide is terminated with the 'tag peptide' encoded by the tmRNA and targeted for degradation. The ribosome is freed to recommence translation, which seems to be the essential function of trans-translation. The sequence is that of SsrA-binding protein from Novosphingobium aromaticivorans (strain ATCC 700278 / DSM 12444 / CCUG 56034 / CIP 105152 / NBRC 16084 / F199).